The chain runs to 446 residues: Exodeoxyribonuclease 7 large subunit (446 aa).

It belongs to the XseA family. In terms of assembly, heterooligomer composed of large and small subunits.

It localises to the cytoplasm. It carries out the reaction Exonucleolytic cleavage in either 5'- to 3'- or 3'- to 5'-direction to yield nucleoside 5'-phosphates.. Bidirectionally degrades single-stranded DNA into large acid-insoluble oligonucleotides, which are then degraded further into small acid-soluble oligonucleotides. The protein is Exodeoxyribonuclease 7 large subunit of Xanthomonas campestris pv. campestris (strain 8004).